A 232-amino-acid polypeptide reads, in one-letter code: Peptidoglycan-recognition protein LB (232 aa).

An N-terminal signal peptide occupies residues 1–15; it reads MTALGLVLLSMMGYS. The 127-residue stretch at 53–179 folds into the N-acetylmuramoyl-L-alanine amidase domain; the sequence is APYVIIHHSY…RQVRDTECPG (127 aa). His-59 serves as a coordination point for Zn(2+). An intrachain disulfide couples Cys-67 to Cys-73. Zn(2+) is bound by residues His-169 and Cys-177. An N-linked (GlcNAc...) asparagine glycan is attached at Asn-196. The interval 213–232 is disordered; that stretch reads HPQAAAPQKPHQSPPAAPKV.

It belongs to the N-acetylmuramoyl-L-alanine amidase 2 family. Monomer. Zn(2+) is required as a cofactor. In terms of tissue distribution, widely expressed.

It is found in the secreted. It carries out the reaction Hydrolyzes the link between N-acetylmuramoyl residues and L-amino acid residues in certain cell-wall glycopeptides.. Its function is as follows. N-acetylmuramyl-L-alanine amidase involved in innate immunity by degrading bacterial peptidoglycans (PGN). Probably plays a scavenger role by digesting biologically active PGN into biologically inactive fragments. Has no direct bacteriolytic activity. The polypeptide is Peptidoglycan-recognition protein LB (PGRP-LB) (Drosophila melanogaster (Fruit fly)).